The primary structure comprises 308 residues: Mitoferrin (308 aa).

Helical transmembrane passes span 13–29 (GGSF…AGFA), 69–89 (ITGL…SHAV), 111–131 (IKVG…ASPM), 168–184 (YTTT…VYFA), 213–233 (LVAG…FDVV), and 285–302 (MVFH…YEYF). Solcar repeat units lie at residues 14-100 (GSFY…LKFK), 108-192 (HHPI…LKKI), and 207-305 (YQLI…FKFI).

Belongs to the mitochondrial carrier (TC 2.A.29) family.

It is found in the mitochondrion inner membrane. Its function is as follows. Mitochondrial solute carriers shuttle metabolites, nucleotides, and cofactors through the mitochondrial inner membrane. Mitochondrial iron transporter that mediates iron uptake. Probably required for heme synthesis of hemoproteins and Fe-S cluster assembly. The polypeptide is Mitoferrin (mcfF) (Dictyostelium discoideum (Social amoeba)).